The primary structure comprises 358 residues: Gibberellin receptor GID1B (358 aa).

Ala-2 bears the N-acetylalanine mark. The Involved in the stabilization of the negatively charged intermediate by the formation of the oxyanion hole signature appears at 113–115 (HGG). Residues 115 to 116 (GS), Tyr-127, and Ser-191 each bind gibberellin A4. Ser-116, Tyr-127, Ser-191, and Phe-238 together coordinate gibberellin A3. Residue Ser-191 is part of the active site. Asp-289 is a catalytic residue. Gly-320 contacts gibberellin A4. Gly-320 serves as a coordination point for gibberellin A3.

Belongs to the 'GDXG' lipolytic enzyme family. Interacts with the DELLA proteins GAI, RGA, RGL1, RGL2 and RGL3 in a GA-dependent manner. Widely expressed.

It localises to the nucleus. Functions as a soluble gibberellin (GA) receptor. GA is an essential hormone that regulates growth and development in plants. Binds with high affinity the biologically active gibberellin GA4, but has no affinity for the biologically inactive GAs. In response to GA, interacts with specific DELLA proteins, known as repressors of GA-induced growth, and targets them for degradation via proteasome. Seems to be required for GA signaling that controls root growth, seed germination and flower development. May function as a dominant GA receptor at low GA concentrations in germination. Partially redundant with GID1A and GID1C. This Arabidopsis thaliana (Mouse-ear cress) protein is Gibberellin receptor GID1B (GID1B).